Reading from the N-terminus, the 342-residue chain is Homocysteine S-methyltransferase 4 (342 aa).

One can recognise a Hcy-binding domain in the interval 13 to 328 (ALRGFVREAG…ATVRAIARAV (316 aa)). Positions 245, 313, and 314 each coordinate Zn(2+).

Monomer. The cofactor is Zn(2+).

It carries out the reaction S-methyl-L-methionine + L-homocysteine = 2 L-methionine + H(+). Its function is as follows. Catalyzes methyl transfer from S-methylmethionine (SMM) to adenosyl-L-homocysteine (AdoMet). SMM degradation (by HMT-1, HMT-2, HMT-3 and HMT-4) and biosynthesis (by MMT1) constitute the SMM cycle in plants, which is probably required to achieve short term control of AdoMet level. The sequence is that of Homocysteine S-methyltransferase 4 (HMT-4) from Zea mays (Maize).